Consider the following 665-residue polypeptide: Coiled-coil domain-containing protein 138 (665 aa).

Thr48 carries the phosphothreonine modification. Ser49 carries the phosphoserine modification. Positions 198 to 323 form a coiled coil; the sequence is QQKFAEELQK…YEFMTIQRLK (126 aa). Position 469 is a phosphoserine (Ser469).

This chain is Coiled-coil domain-containing protein 138 (CCDC138), found in Homo sapiens (Human).